An 814-amino-acid polypeptide reads, in one-letter code: Acyl-coenzyme A dehydrogenase (814 aa).

Catalysis depends on E497, which acts as the Proton acceptor.

It belongs to the acyl-CoA dehydrogenase family. FAD is required as a cofactor.

It catalyses the reaction a medium-chain 2,3-saturated fatty acyl-CoA + oxidized [electron-transfer flavoprotein] + H(+) = a medium-chain (2E)-enoyl-CoA + reduced [electron-transfer flavoprotein]. The catalysed reaction is a long-chain 2,3-saturated fatty acyl-CoA + oxidized [electron-transfer flavoprotein] + H(+) = a long-chain (2E)-enoyl-CoA + reduced [electron-transfer flavoprotein]. It functions in the pathway lipid metabolism; fatty acid beta-oxidation. Its function is as follows. Catalyzes the dehydrogenation of acyl-coenzymes A (acyl-CoAs) to 2-enoyl-CoAs, the first step of the beta-oxidation cycle of fatty acid degradation. Is required for E.coli to utilize dodecanoate or oleate as the sole carbon and energy source for growth. The sequence is that of Acyl-coenzyme A dehydrogenase from Escherichia coli (strain K12).